We begin with the raw amino-acid sequence, 650 residues long: Serine/threonine-protein kinase oca2 (650 aa).

A compositionally biased stretch (polar residues) spans 1 to 14; sequence MSVTPPNVQFNLNG. Disordered regions lie at residues 1–210 and 222–288; these read MSVT…PHDI and HHGK…KSSA. Serine 72 carries the phosphoserine modification. A compositionally biased stretch (basic and acidic residues) spans 78–98; it reads NHIDPKLAEDRYRSSAARHFE. Residues 140-154 show a composition bias toward polar residues; sequence PSGSTGYTSPALSQN. Basic residues-rich tracts occupy residues 222–231 and 245–257; these read HHGKHGHHGH and HDKH…HEKH. The segment covering 258–279 has biased composition (basic and acidic residues); it reads HSSLDLRRFFKSHQKTDKEKKP. Phosphoserine is present on serine 286. Positions 302-614 constitute a Protein kinase domain; the sequence is GKFGRMLGSG…IHRVFADNWI (313 aa). Residues 308–316 and lysine 331 each bind ATP; that span reads LGSGAGGSV. The active-site Proton acceptor is the aspartate 425. The segment at 549 to 570 is disordered; sequence PIRKTDESHSPNSKTDNSSTHK.

The protein belongs to the protein kinase superfamily. Ser/Thr protein kinase family.

It localises to the cytoplasm. The catalysed reaction is L-seryl-[protein] + ATP = O-phospho-L-seryl-[protein] + ADP + H(+). It carries out the reaction L-threonyl-[protein] + ATP = O-phospho-L-threonyl-[protein] + ADP + H(+). Overexpression causes cell cycle arrest. This is Serine/threonine-protein kinase oca2 from Schizosaccharomyces pombe (strain 972 / ATCC 24843) (Fission yeast).